We begin with the raw amino-acid sequence, 122 residues long: Large ribosomal subunit protein uL14 (122 aa).

It belongs to the universal ribosomal protein uL14 family. As to quaternary structure, part of the 50S ribosomal subunit. Forms a cluster with proteins L3 and L19. In the 70S ribosome, L14 and L19 interact and together make contacts with the 16S rRNA in bridges B5 and B8.

Binds to 23S rRNA. Forms part of two intersubunit bridges in the 70S ribosome. The protein is Large ribosomal subunit protein uL14 of Petrotoga mobilis (strain DSM 10674 / SJ95).